The primary structure comprises 293 residues: MASLKEIRAKVTSIKSTQKITRAMQMVAASKMRRAQERMEVGRPYAESMRRVVSHLVNASSDYKHPYMTNRSVNRVGYILVTSDRGLAGGLNINLFKKLMHHVQEFQNQSVEAEFAVIGSKGVSFFKSFGGKVTSAVTDYGDNPTFEQLNAPVQAMLDDYANGRLDRIYMVYNKFVNAMTQQPIVTQLVPLPDSAIDSADAGINTELSWDYIYEPDVKTLIDGLLNRYIESIVYQAVMENIASEQSARMVAMKAATDNAGDLINDLQLVYNKLRQAAITREISEIVGGAAAVS.

This sequence belongs to the ATPase gamma chain family. As to quaternary structure, F-type ATPases have 2 components, CF(1) - the catalytic core - and CF(0) - the membrane proton channel. CF(1) has five subunits: alpha(3), beta(3), gamma(1), delta(1), epsilon(1). CF(0) has three main subunits: a, b and c.

Its subcellular location is the cell inner membrane. Functionally, produces ATP from ADP in the presence of a proton gradient across the membrane. The gamma chain is believed to be important in regulating ATPase activity and the flow of protons through the CF(0) complex. The sequence is that of ATP synthase gamma chain from Psychrobacter sp. (strain PRwf-1).